The following is a 1135-amino-acid chain: Exportin-6-A (1135 aa).

The region spanning 31–97 is the Importin N-terminal domain; it reads IESLLNNFAQ…RNSLPKLLLS (67 aa).

The protein belongs to the exportin family. In terms of tissue distribution, expressed during meiotic maturation 2 hours after germinal vesicle break down (GVBD) and in unfertilized and fertilized eggs, but not in oocytes (at protein level). Expressed in somatic cells, in oocytes, during meiotic maturation and in unfertilized and fertilized eggs.

It is found in the nucleus. The protein resides in the cytoplasm. Its function is as follows. Mediates the nuclear export of actin and profilin-actin complexes in somatic cells. Oocyte nuclei lack active actin export. The chain is Exportin-6-A (xpo6-a) from Xenopus laevis (African clawed frog).